The following is a 1888-amino-acid chain: Nuclear pore membrane glycoprotein 210-like (1888 aa).

A signal peptide spans 1-35; sequence MTGCPASSRRRGFGLFFFLRLHRLLLLFLVLRGTL. N-linked (GlcNAc...) asparagine glycans are attached at residues N84, N304, N348, N495, N522, N812, and N931. Residues 1082-1154 form the BIG2 domain; the sequence is FPPFRLLPEK…TIQTVNEDTG (73 aa). N1445 carries N-linked (GlcNAc...) asparagine glycosylation. Residues 1813 to 1833 traverse the membrane as a helical segment; that stretch reads ILLLTLFAVLASTASIFLAYN. The N-linked (GlcNAc...) asparagine glycan is linked to N1859.

It belongs to the NUP210 family.

The protein localises to the nucleus membrane. This Homo sapiens (Human) protein is Nuclear pore membrane glycoprotein 210-like (NUP210L).